Here is a 367-residue protein sequence, read N- to C-terminus: Aurora kinase (367 aa).

Composition is skewed to polar residues over residues 1–29 and 37–48; these read MQRN…TSRI and HSPQQRNPNSKI. The segment at 1–52 is disordered; sequence MQRNSLVNIKLNANSPSKKTTTRPNTSRINKPWRISHSPQQRNPNSKIPSPV. Serine 5 carries the phosphoserine; by autocatalysis modification. Serine 76 bears the Phosphoserine mark. A Protein kinase domain is found at 104-355; sequence FELGKKLGKG…LGDVKMHPWI (252 aa). Residues 110–118 and lysine 133 each bind ATP; that span reads LGKGKFGKV. The active-site Proton acceptor is aspartate 227. Residue threonine 260 is modified to Phosphothreonine; by autocatalysis.

Belongs to the protein kinase superfamily. Ser/Thr protein kinase family. Aurora subfamily. In terms of assembly, component of the CPC complex at least composed of IPL1, BIR1 and SLI15.

It localises to the nucleus. Its subcellular location is the cytoplasm. It is found in the cytoskeleton. The protein resides in the spindle. The protein localises to the chromosome. It localises to the centromere. Its subcellular location is the kinetochore. The enzyme catalyses L-seryl-[protein] + ATP = O-phospho-L-seryl-[protein] + ADP + H(+). It carries out the reaction L-threonyl-[protein] + ATP = O-phospho-L-threonyl-[protein] + ADP + H(+). In terms of biological role, component of the chromosomal passenger complex (CPC), a complex that acts as a key regulator of chromosome segregation and cytokinesis. Has a role in error-correction of aberrent kinetochore-microtubule attachments to ensure that sister kinetochores become bioriented and connect to opposite poles by promoting spindle assembly checkpoint signaling. Acts in opposition to the phosphatase PP1. Not required for kinetochore detachment from microtubules during replication of centromeric DNA. Phosphorylates histone H3 to form H3S10ph during mitosis and meiosis. Phosphorylates CNN1, which contributes to the enrichment of CNN1 on anaphase kinetochores. Phosphorylates RGD1. This Saccharomyces cerevisiae (strain ATCC 204508 / S288c) (Baker's yeast) protein is Aurora kinase (IPL1).